The primary structure comprises 150 residues: MVRLALVVAEFNYDITSLMLQKAIEHARFLGAEVTYVVKVPGVYDIPMVLKDVVAKSDVDAVATLGAVIQGATKHDELVAQQAARKILDIAVEVDKPITLGIIGHGANRMQALERVEEYARRAVEAAVKLARRKKLLKDAKYSGATVYVE.

5-amino-6-(D-ribitylamino)uracil-binding positions include Phe-11, 43–45 (VYD), and 67–69 (AVI). 72-73 (AT) contacts (2S)-2-hydroxy-3-oxobutyl phosphate. His-75 serves as the catalytic Proton donor. Leu-100 contacts 5-amino-6-(D-ribitylamino)uracil. (2S)-2-hydroxy-3-oxobutyl phosphate is bound at residue Arg-115.

It belongs to the DMRL synthase family.

The catalysed reaction is (2S)-2-hydroxy-3-oxobutyl phosphate + 5-amino-6-(D-ribitylamino)uracil = 6,7-dimethyl-8-(1-D-ribityl)lumazine + phosphate + 2 H2O + H(+). The protein operates within cofactor biosynthesis; riboflavin biosynthesis; riboflavin from 2-hydroxy-3-oxobutyl phosphate and 5-amino-6-(D-ribitylamino)uracil: step 1/2. In terms of biological role, catalyzes the formation of 6,7-dimethyl-8-ribityllumazine by condensation of 5-amino-6-(D-ribitylamino)uracil with 3,4-dihydroxy-2-butanone 4-phosphate. This is the penultimate step in the biosynthesis of riboflavin. This chain is 6,7-dimethyl-8-ribityllumazine synthase, found in Pyrobaculum neutrophilum (strain DSM 2338 / JCM 9278 / NBRC 100436 / V24Sta) (Thermoproteus neutrophilus).